Here is a 625-residue protein sequence, read N- to C-terminus: Arginine--tRNA ligase (625 aa).

The short motif at 117–127 (ANPIHPLHIGH) is the 'HIGH' region element.

This sequence belongs to the class-I aminoacyl-tRNA synthetase family.

It is found in the cytoplasm. The enzyme catalyses tRNA(Arg) + L-arginine + ATP = L-arginyl-tRNA(Arg) + AMP + diphosphate. This Saccharolobus solfataricus (strain ATCC 35092 / DSM 1617 / JCM 11322 / P2) (Sulfolobus solfataricus) protein is Arginine--tRNA ligase.